The following is a 79-amino-acid chain: MAQQRRGGFKRRKKVDFIAANKIEYVDYKDTELLSRFVSERGKILPRRVPGTSAKNQRKVTTAIKRARVMALMPYVNED.

This sequence belongs to the bacterial ribosomal protein bS18 family. In terms of assembly, part of the 30S ribosomal subunit. Forms a tight heterodimer with protein bS6.

Functionally, binds as a heterodimer with protein bS6 to the central domain of the 16S rRNA, where it helps stabilize the platform of the 30S subunit. The chain is Small ribosomal subunit protein bS18 from Streptococcus pyogenes serotype M49 (strain NZ131).